We begin with the raw amino-acid sequence, 905 residues long: Coatomer subunit beta' (905 aa).

WD repeat units lie at residues 13–52 (AMSDRVKSVDLHPTEPWMLASLYNGSVCVWNHETQTLVKT), 55–94 (VCDLPVRAAKFVARKNWVVTGADDMQIRVFNYNTLERVHM), 97–136 (AHSDYIRCIAVHPTQPFILTSSDDMLIKLWDWDKKWSCSQ), 140–180 (GHTH…PNFT), 183–224 (GHEK…CVQT), 227–266 (GHAQNVSCATFHPELPIIITGSEDGTVRIWHSSTYRLEST), 350–388 (SCEIYPQTIQHNPNGRFVVVCGDGEYIIYTAMALRNKSF), and 390–425 (SAQEFAWAHDSSEYAIRESNSVVKIFKNFKEKKSFK). Lys-627 carries the post-translational modification N6-acetyllysine. One copy of the WD 9 repeat lies at 746–783 (IRTGRLPEAAFLARTYLPSQVSRVVKLWRENLSKVNQK). The disordered stretch occupies residues 837-905 (EEAKRFQPSR…INLDEDILDD (69 aa)). At Ser-859 the chain carries Phosphoserine. The stretch at 867–891 (QTTHKEEKSFQELEDDLDTMELEDI) forms a coiled coil. The segment covering 878-905 (ELEDDLDTMELEDIDTTDINLDEDILDD) has biased composition (acidic residues).

It belongs to the WD repeat COPB2 family. As to quaternary structure, oligomeric complex that consists of at least the alpha, beta, beta', gamma, delta, epsilon and zeta subunits. Probably interacts with PEX11A. Interacts with JAGN1. Interacts with SCYL1.

It is found in the cytoplasm. Its subcellular location is the cytosol. The protein localises to the golgi apparatus membrane. The protein resides in the cytoplasmic vesicle. It localises to the COPI-coated vesicle membrane. Functionally, the coatomer is a cytosolic protein complex that binds to dilysine motifs and reversibly associates with Golgi non-clathrin-coated vesicles, which further mediate biosynthetic protein transport from the ER, via the Golgi up to the trans Golgi network. Coatomer complex is required for budding from Golgi membranes, and is essential for the retrograde Golgi-to-ER transport of dilysine-tagged proteins. In mammals, the coatomer can only be recruited by membranes associated to ADP-ribosylation factors (ARFs), which are small GTP-binding proteins; the complex also influences the Golgi structural integrity, as well as the processing, activity, and endocytic recycling of LDL receptors. Its function is as follows. This coatomer complex protein, essential for Golgi budding and vesicular trafficking, is a selective binding protein (RACK) for protein kinase C, epsilon type. It binds to Golgi membranes in a GTP-dependent manner. The chain is Coatomer subunit beta' (Copb2) from Rattus norvegicus (Rat).